A 114-amino-acid chain; its full sequence is Kininogen-2 (114 aa).

An N-terminal signal peptide occupies residues 1–23 (MRLWFCLSFFIVLCLEHFPGTLA). The span at 35 to 45 (TRLHGHHKPSR) shows a compositional bias: basic residues. The tract at residues 35–114 (TRLHGHHKPS…QIPGLGPLRG (80 aa)) is disordered. The span at 65-80 (PESEEKTEQFLRDLPK) shows a compositional bias: basic and acidic residues. Arginine amide is present on arginine 113.

This sequence belongs to the bradykinin-related peptide family. As to expression, expressed by the skin glands.

The protein localises to the secreted. Functionally, potent vasodilator. Binds B1 (BDKRB1) and B2 (BDKRB2) bradykinin receptors. In Bombina maxima (Giant fire-bellied toad), this protein is Kininogen-2.